Here is a 121-residue protein sequence, read N- to C-terminus: uncharacterized protein (121 aa).

It localises to the mitochondrion. This is an uncharacterized protein from Arabidopsis thaliana (Mouse-ear cress).